A 1011-amino-acid chain; its full sequence is MAMQREAGVQDFVLLDQVSMEKFMDNLRKRFQNGSIYTYIGEVCVSMNPYRQMNIYGPETIRKYKGRELFENAPHLFAIADSAYRVLKQRQQDTCILISGESGAGKTEASKIIMKYIAAVTNAQGQNEIERVKNVLIQSNAILETFGNAKTNRNDNSSRFGKYMDIEFDYKADPVGGIITNYLLEKSRVVQQQPGERNFHSFYQLLRGANDNELRQYELQKETGKYHYLNQGSMDILTEKSDYKGTCNAFKTLGFSTDEVQTIWRTIAAVLHLGNVEFQTIEDELVISNKQHLKSTAKLLQVTETELSTALTKRVIAAGGNVMQKDHNATQAEYGKDALAKAIYDRLFTWIISRINRAILFRGSKTQARFNSVIGVLDIYGFEIFDSNSFEQFCINYCNEKLQQLFIELVLKQEQEEYQREGIEWTNIEYFNNKIICDLVEQPHKGIIAIMDEACLSVGKVTDDTLLGAMDKNLSKHPHYTSRQLKPTDKELKHREDFRITHYAGDVIYNINGFIEKNKDTLYQDFKRLLHNSKDANLSEMWPEGAQDIKKTTKRPLTAGTLFQRSMADLVVTLLKKEPFYVRCIKPNDLKSSTVFDEERVEHQVRYLGLLENLRVRRAGFVHRQRYDKFLLRYKMISQYTWPNFRAGSDRDGVRVLIEEKKFAQDVKYGHTKIFIRSPRTLFALEHQRNEMIPHIVTLLQKRVRGWIVRRNFKKMKAAITIVRAYKAYKLRSYVQELANRLRKAKQMRDYGKSIQWPQPPLAGRKVEAKLHRMFDFWRANMILHKYPRSEWPQLRLQIIAATALAGRRPYWGQARRWVGDYLANSQENSGYEAYNGSIKNIRNHPADGETFQQVLFSSFVKKFNHFNKQANRAFIVSDSTIHKLDGIKNKFKDMKRTIKIRELTSISVSPGRDQLIVFHSSKNKDLVFSLESEYTPLKEDRIGEVVGIVCKKYHDLTGTELRVNVTTNISCRLDGKARIITVEAASNVEVPNFRPKEGNIIFEVPAAYCV.

In terms of domain architecture, Myosin motor spans 7–690 (AGVQDFVLLD…TLFALEHQRN (684 aa)). 100–107 (GESGAGKT) is an ATP binding site. Residues 567 to 589 (MADLVVTLLKKEPFYVRCIKPND) are actin-binding. 2 consecutive IQ domains span residues 694–714 (PHIV…RNFK) and 716–736 (MKAA…SYVQ). A TH1 domain is found at 806–1007 (AGRRPYWGQA…EGNIIFEVPA (202 aa)).

Belongs to the TRAFAC class myosin-kinesin ATPase superfamily. Myosin family. In terms of assembly, binds to F-actin. Interacts with arm. Interacts with shg. Interacts with ds (via intracellular region). In the embryo, expressed in gastric caeca, midgut cells of the proventriculus, and in the mid and hindgut. In the larval gut brush border, expression is in the terminal web domain. In the adult gut brush border, expression remains in the web domain and has also moved into the microvilli. Also expressed at low levels in follicle cells during oogenesis.

The protein resides in the cytoplasm. Its subcellular location is the cell cortex. It localises to the cytoskeleton. It is found in the cell membrane. The protein localises to the cell junction. The protein resides in the adherens junction. Its subcellular location is the cell projection. Its function is as follows. Unconventional myosin that functions as actin-based motor protein with ATPase activity. Binds to membranes enriched in phosphatidylinositol 4-5-bisphosphate, and can glide along actin filaments when anchored to a lipid bilayer. Generates left-right asymmetry at the level of single cells, organs and the whole body via its interaction with the actin cytoskeleton, both in the embryo and the adult. Normal left-right asymmetry of the larval midgut and hindgut requires expression in the embryonic hindgut epithelium during a critical time period, 10 to 12.75 hours after egg laying. This period corresponds to a late stage of germband retraction, and precedes left-right asymmetric morphogenesis. Expression in segment H1 of the imaginal ring is required at 0 to 24 hours after pupation for changes of cell shape and orientation in the H2 segment, which then gives rise to normal, dextral looping of the adult hindgut. Required during a critical period, 126-132 hours after egg laying, for normal, dextral rotation of the adult male genitalia. Has a double role by promoting dextral rotation in the posterior compartment of segment A8 of the male genital disk, and in repressing sinistral looping in the anterior compartment. The sequence is that of Unconventional myosin ID from Drosophila melanogaster (Fruit fly).